The chain runs to 142 residues: Large ribosomal subunit protein uL13 (142 aa).

This sequence belongs to the universal ribosomal protein uL13 family. In terms of assembly, part of the 50S ribosomal subunit.

Functionally, this protein is one of the early assembly proteins of the 50S ribosomal subunit, although it is not seen to bind rRNA by itself. It is important during the early stages of 50S assembly. The polypeptide is Large ribosomal subunit protein uL13 (Pseudomonas paraeruginosa (strain DSM 24068 / PA7) (Pseudomonas aeruginosa (strain PA7))).